The sequence spans 122 residues: Small ribosomal subunit protein uS13 (122 aa).

The disordered stretch occupies residues 97-122 (PVRGQRTHTNARTRKGPAKAIAGKKK).

The protein belongs to the universal ribosomal protein uS13 family. Part of the 30S ribosomal subunit. Forms a loose heterodimer with protein S19. Forms two bridges to the 50S subunit in the 70S ribosome.

In terms of biological role, located at the top of the head of the 30S subunit, it contacts several helices of the 16S rRNA. In the 70S ribosome it contacts the 23S rRNA (bridge B1a) and protein L5 of the 50S subunit (bridge B1b), connecting the 2 subunits; these bridges are implicated in subunit movement. Contacts the tRNAs in the A and P-sites. This Brucella anthropi (strain ATCC 49188 / DSM 6882 / CCUG 24695 / JCM 21032 / LMG 3331 / NBRC 15819 / NCTC 12168 / Alc 37) (Ochrobactrum anthropi) protein is Small ribosomal subunit protein uS13.